A 388-amino-acid polypeptide reads, in one-letter code: MNKQIFVLYFNIFLIFLGIGLVIPVLPVYLKDLGLTGSDLGLLVAAFALSQMIISPFGGTLADKLGKKLIICIGLILFSVSEFMFAVGHNFSVLMLSRVIGGMSAGMVMPGVTGLIADISPSHQKAKNFGYMSAIINSGFILGPGIGGFMAEVSHRMPFYFAGALGILAFIMSIVLIHDPKKSTTSGFQKLEPQLLTKINWKVFITPVILTLVLSFGLSAFETLYSLYTADKVNYSPKDISIAITGGGIFGALFQIYFFDKFMKYFSELTFIAWSLLYSVVVLILLVFANDYWSIMLISFVVFIGFDMIRPAITNYFSNIAGERQGFAGGLNSTFTSMGNFIGPLIAGALFDVHIEAPIYMAIGVSLAGVVIVLIEKQHRAKLKEQNM.

The next 12 membrane-spanning stretches (helical) occupy residues 5-25 (IFVLYFNIFLIFLGIGLVIPV), 42-62 (LLVAAFALSQMIISPFGGTLA), 69-89 (LIICIGLILFSVSEFMFAVGH), 99-119 (VIGGMSAGMVMPGVTGLIADI), 129-149 (FGYMSAIINSGFILGPGIGGF), 157-177 (MPFYFAGALGILAFIMSIVLI), 201-221 (WKVFITPVILTLVLSFGLSAF), 239-259 (DISIAITGGGIFGALFQIYFF), 269-289 (LTFIAWSLLYSVVVLILLVFA), 293-313 (WSIMLISFVVFIGFDMIRPAI), 331-351 (LNSTFTSMGNFIGPLIAGALF), and 355-375 (IEAPIYMAIGVSLAGVVIVLI).

This sequence belongs to the major facilitator superfamily. TCR/Tet family.

The protein resides in the cell membrane. Its function is as follows. Involved in quinolone resistance. May constitute a membrane-associated active efflux pump of hydrophilic quinolones. The polypeptide is Quinolone resistance protein NorA (norA) (Staphylococcus aureus (strain COL)).